The primary structure comprises 208 residues: uncharacterized protein (208 aa).

One can recognise a J domain in the interval 4–71; sequence DYYAILNITP…SRRAQYDRES (68 aa). The disordered stretch occupies residues 67-100; it reads YDRESASSSAKPRQSFFSRTNPQPQSQSQQGGPS. Polar residues predominate over residues 72–87; the sequence is ASSSAKPRQSFFSRTN. Residues 88–100 are compositionally biased toward low complexity; the sequence is PQPQSQSQQGGPS. A helical membrane pass occupies residues 127 to 147; it reads GIANAFWTIVGTLAGAALGFI.

The protein belongs to the DnaJ family.

Its subcellular location is the endoplasmic reticulum membrane. This is an uncharacterized protein from Schizosaccharomyces pombe (strain 972 / ATCC 24843) (Fission yeast).